Here is a 178-residue protein sequence, read N- to C-terminus: MSRIGNKVVVLPAGVEIKQDGNNITVKGPKGELTREFSSDIKMNIEGNEVTFIRPNDSKEMKTIHGTTRANFNNMVVGVSEGFQKALELIGVGYRAQVQGNKLTLNVGYSHPVEMTAPEGVTFEVPANTQVIVKGINKEVVGELAANIRGVRPPEPYKGKGIRYVGEFVRRKEGKTGK.

Belongs to the universal ribosomal protein uL6 family. In terms of assembly, part of the 50S ribosomal subunit.

In terms of biological role, this protein binds to the 23S rRNA, and is important in its secondary structure. It is located near the subunit interface in the base of the L7/L12 stalk, and near the tRNA binding site of the peptidyltransferase center. The sequence is that of Large ribosomal subunit protein uL6 from Enterococcus faecalis (strain ATCC 700802 / V583).